Consider the following 418-residue polypeptide: Putative L-glutamine:3-amino-2,3-dideoxy-scyllo-inosose aminotransferase (418 aa).

Lys199 carries the N6-(pyridoxal phosphate)lysine modification.

It belongs to the DegT/DnrJ/EryC1 family. L-glutamine:2-deoxy-scyllo-inosose/scyllo-inosose aminotransferase subfamily. Requires pyridoxal 5'-phosphate as cofactor.

It catalyses the reaction 3-amino-2,3-dideoxy-scyllo-inosose + L-glutamine = 2-deoxystreptamine + 2-oxoglutaramate. The protein operates within metabolic intermediate biosynthesis; 2-deoxystreptamine biosynthesis; 2-deoxystreptamine from D-glucose 6-phosphate: step 4/4. Its pathway is antibiotic biosynthesis; gentamicin biosynthesis. Catalyzes the transamination of 3-amino-2,3-dideoxy-scyllo-inosose (amino-DOI) into 2-deoxystreptamine (DOS). This chain is Putative L-glutamine:3-amino-2,3-dideoxy-scyllo-inosose aminotransferase (gtmD), found in Micromonospora echinospora (Micromonospora purpurea).